Here is a 95-residue protein sequence, read N- to C-terminus: UPF0473 protein PEPE_1260 (95 aa).

It belongs to the UPF0473 family.

The protein is UPF0473 protein PEPE_1260 of Pediococcus pentosaceus (strain ATCC 25745 / CCUG 21536 / LMG 10740 / 183-1w).